The sequence spans 197 residues: FMN-dependent NADH:quinone oxidoreductase (197 aa).

Residues Ser10, Ser16–Ser18, Met93–Phe96, and Thr137–Gly140 each bind FMN.

It belongs to the azoreductase type 1 family. Homodimer. Requires FMN as cofactor.

It carries out the reaction 2 a quinone + NADH + H(+) = 2 a 1,4-benzosemiquinone + NAD(+). The enzyme catalyses N,N-dimethyl-1,4-phenylenediamine + anthranilate + 2 NAD(+) = 2-(4-dimethylaminophenyl)diazenylbenzoate + 2 NADH + 2 H(+). Its function is as follows. Quinone reductase that provides resistance to thiol-specific stress caused by electrophilic quinones. Functionally, also exhibits azoreductase activity. Catalyzes the reductive cleavage of the azo bond in aromatic azo compounds to the corresponding amines. The sequence is that of FMN-dependent NADH:quinone oxidoreductase from Shewanella denitrificans (strain OS217 / ATCC BAA-1090 / DSM 15013).